A 194-amino-acid chain; its full sequence is MSMYNYVKEAWKVPANSYVKELQWARMQDWRKEPSVLRIERPTRIDRARNLGYKAKQGIVVVRVSVRRGGLRKPRPKHSKKPATLGINKITMAKSIQRIAEERAAKRYPNMEVLNSYWVGQDGKQKWYEIILVDPCHPSIKNDKSYSWLSTGNHKGRANRGLTSAGKKGRGLMYKGKGAEKARPGVRANGKKTK.

The segment at 158 to 194 is disordered; that stretch reads ANRGLTSAGKKGRGLMYKGKGAEKARPGVRANGKKTK.

The protein belongs to the eukaryotic ribosomal protein eL15 family.

This is Large ribosomal subunit protein eL15 from Methanococcus maripaludis (strain DSM 14266 / JCM 13030 / NBRC 101832 / S2 / LL).